The primary structure comprises 37 residues: Non-specific lipid-transfer protein (37 aa).

The protein belongs to the plant LTP family.

Its function is as follows. Plant non-specific lipid-transfer proteins transfer phospholipids as well as galactolipids across membranes. May play a role in wax or cutin deposition in the cell walls of expanding epidermal cells and certain secretory tissues. The sequence is that of Non-specific lipid-transfer protein from Artemisia vulgaris (Mugwort).